We begin with the raw amino-acid sequence, 348 residues long: Chloroacetanilide N-alkylformylase, oxygenase component (348 aa).

Residues 7-108 form the Rieske domain; that stretch reads WYAVAWCDEV…ARERHKLIWA (102 aa). [2Fe-2S] cluster-binding residues include C47, H49, C66, and H69. Fe cation is bound by residues H159 and H164. H250 is a binding site for substrate. D293 contributes to the Fe cation binding site.

The chloroacetanilide N-alkylformylase multicomponent enzyme system is composed of an oxygenase component (CndA) and an electron transfer component formed by a ferredoxin reductase (CndC1) and a ferredoxin (CndB1). In vitro, chloroacetanilide N-alkylformylase assays in which CndB1 is substituted for CndB2 demonstrate that the two enzymes possess nearly identical activities. The cofactor is [2Fe-2S] cluster.

The catalysed reaction is butachlor + 2 reduced [2Fe-2S]-[ferredoxin] + O2 + 2 H(+) = butyl formate + N-(2,6-diethylphenyl)-2-chloroacetamide + 2 oxidized [2Fe-2S]-[ferredoxin] + H2O. It catalyses the reaction alachlor + 2 reduced [2Fe-2S]-[ferredoxin] + O2 + 2 H(+) = methyl formate + N-(2,6-diethylphenyl)-2-chloroacetamide + 2 oxidized [2Fe-2S]-[ferredoxin] + H2O. The enzyme catalyses acetochlor + 2 reduced [2Fe-2S]-[ferredoxin] + O2 + 2 H(+) = N-(2-ethyl-6-methylphenyl)-2-chloroacetamide + ethyl formate + 2 oxidized [2Fe-2S]-[ferredoxin] + H2O. Its activity is regulated as follows. Activity enhanced by Fe(2+) and Mg(2+) ions. Divalent cations such as Ca(2+), Cr(2+), Co(2+), and Mn(2+) show moderate inhibition of the enzyme, whereas heavy metal ions such as Ag(+), Cu(2+), Pb(2+), Hg(2+), Ni(2+) and Zn(2+) severely inhibit the activity. Its function is as follows. Component of the chloroacetanilide N-alkylformylase multicomponent enzyme system involved in the degradation of chloroacetanilide herbicides (N-alkoxyalkyl-N-chloroacetyl-substituted aniline derivatives). In vitro, catalyzes the N-dealkylation of butachlor, alachlor and acetochlor to yield 2-chloro-N-(2,6-diethylphenyl)acetamide (CDEPA) (for alachlor and butachlor) and 2-chloro-N-(2-methyl-6-ethylphenyl)acetamide (CMEPA) (for acetochlor). The chain is Chloroacetanilide N-alkylformylase, oxygenase component from Rhizorhabdus wittichii (strain DC-6 / KACC 16600) (Sphingomonas wittichii).